A 114-amino-acid polypeptide reads, in one-letter code: Putative cysteine proteinase inhibitor 9 (114 aa).

A signal peptide spans 1–23; that stretch reads MRTSSLVLFAAVAVFGAACTAAA.

This sequence belongs to the cystatin family. Phytocystatin subfamily.

It localises to the secreted. In terms of biological role, specific inhibitor of cysteine proteinases. Probably involved in the regulation of endogenous processes and in defense against pests and pathogens. The sequence is that of Putative cysteine proteinase inhibitor 9 from Oryza sativa subsp. japonica (Rice).